The sequence spans 178 residues: Translation initiation factor IF-3 (178 aa).

Positions 1 to 20 (MRRPFRATPVQKDGPRSNRD) are disordered.

The protein belongs to the IF-3 family. In terms of assembly, monomer.

It localises to the cytoplasm. In terms of biological role, IF-3 binds to the 30S ribosomal subunit and shifts the equilibrium between 70S ribosomes and their 50S and 30S subunits in favor of the free subunits, thus enhancing the availability of 30S subunits on which protein synthesis initiation begins. The sequence is that of Translation initiation factor IF-3 from Brucella anthropi (strain ATCC 49188 / DSM 6882 / CCUG 24695 / JCM 21032 / LMG 3331 / NBRC 15819 / NCTC 12168 / Alc 37) (Ochrobactrum anthropi).